The sequence spans 413 residues: Multidrug resistance protein MdtM (413 aa).

Residues 1 to 14 lie on the Cytoplasmic side of the membrane; the sequence is MQRIIQFFSQRATT. A helical membrane pass occupies residues 15–35; sequence LFFPMALILYDFAAYLTTDLI. Residues 36–51 lie on the Periplasmic side of the membrane; it reads QPGIINVVRDFNADVS. Residues 52–72 form a helical membrane-spanning segment; that stretch reads LAPASVSLYLAGGMALQWLLG. Residues 73–81 lie on the Cytoplasmic side of the membrane; sequence PLSDRIGRR. A helical membrane pass occupies residues 82–102; sequence PVLIAGALIFTLACAATLLTT. Topologically, residues 103 to 106 are periplasmic; that stretch reads SMTQ. Residues 107-127 form a helical membrane-spanning segment; the sequence is FLVARFVQGTSICFIATVGYV. Topologically, residues 128–140 are cytoplasmic; it reads TVQEAFGQTKAIK. Residues 141-161 form a helical membrane-spanning segment; that stretch reads LMAIITSIVLVAPVIGPLSGA. Residues 162–170 are Periplasmic-facing; sequence ALMHFVHWK. The helical transmembrane segment at 171 to 191 threads the bilayer; the sequence is VLFGIIAVMGLLALCGLLLAM. Residues 192–225 are Cytoplasmic-facing; sequence PETVQRGAVPFSAVSVLRDFRNVFRNPIFLTGAA. The helical transmembrane segment at 226-246 threads the bilayer; that stretch reads TLSLSYIPMMSWVAVSPVILI. Residues 247-254 lie on the Periplasmic side of the membrane; that stretch reads DAGGMSTS. Residues 255 to 275 traverse the membrane as a helical segment; it reads QFAWAQVPVFGAVIVANMIVV. At 276 to 289 the chain is on the cytoplasmic side; it reads RLVKDPTRPRFIWR. Helical transmembrane passes span 290 to 310 and 311 to 331; these read AVPI…LLPH and VWLW…MIFP. The Cytoplasmic portion of the chain corresponds to 332–351; it reads TLFRFTLFSNNLPKGTVSAS. The helical transmembrane segment at 352–372 threads the bilayer; sequence LNMVILTVMAVSVEVGRWLWF. Residues 373–376 lie on the Periplasmic side of the membrane; that stretch reads HGGR. A helical transmembrane segment spans residues 377-397; the sequence is LPFHLLAAVAGVIVVFTLATL. The Cytoplasmic portion of the chain corresponds to 398–413; it reads LQRVRQHEAAELAAEK.

The protein belongs to the major facilitator superfamily.

Its subcellular location is the cell inner membrane. In terms of biological role, proton-dependent efflux pump. Confers resistance to a broad spectrum of chemically unrelated substrates. This Salmonella typhimurium (strain LT2 / SGSC1412 / ATCC 700720) protein is Multidrug resistance protein MdtM (mdtM).